Reading from the N-terminus, the 106-residue chain is ATP-dependent Clp protease adapter protein ClpS (106 aa).

The disordered stretch occupies residues 1 to 22 (MNEYHNSLKSKESVKDERQQKL). A compositionally biased stretch (basic and acidic residues) spans 9 to 20 (KSKESVKDERQQ).

Belongs to the ClpS family. Binds to the N-terminal domain of the chaperone ClpA.

Involved in the modulation of the specificity of the ClpAP-mediated ATP-dependent protein degradation. The sequence is that of ATP-dependent Clp protease adapter protein ClpS from Photorhabdus laumondii subsp. laumondii (strain DSM 15139 / CIP 105565 / TT01) (Photorhabdus luminescens subsp. laumondii).